Consider the following 523-residue polypeptide: UDP-glucuronosyltransferase 2B16 (523 aa).

The first 16 residues, Leu-1 to Cys-16, serve as a signal peptide directing secretion. N6-succinyllysine is present on Lys-129. A glycan (N-linked (GlcNAc...) asparagine) is linked at Asn-309. Residues Val-487–Ile-503 traverse the membrane as a helical segment.

Belongs to the UDP-glycosyltransferase family.

Its subcellular location is the microsome membrane. It localises to the endoplasmic reticulum membrane. It catalyses the reaction glucuronate acceptor + UDP-alpha-D-glucuronate = acceptor beta-D-glucuronoside + UDP + H(+). UDPGT is of major importance in the conjugation and subsequent elimination of potentially toxic xenobiotics and endogenous compounds. Acts on small phenolic agents such as 2-beta-naphthol and 4-methylumbelliferone as well as bulky phenolic compounds like 2-hydroxy- and 4-hydroxybiphenyl. In contrast to 2B13 it is active toward 4-hydroxyesterone. This is UDP-glucuronosyltransferase 2B16 (UGT2B16) from Oryctolagus cuniculus (Rabbit).